A 539-amino-acid chain; its full sequence is Probable glycerol kinase (539 aa).

Thr-12 provides a ligand contact to substrate. Residue Arg-16 coordinates ATP. Residues Arg-86, Tyr-168, and Asp-285 each contribute to the substrate site. ATP is bound by residues Thr-307, Gly-352, and 453 to 457; that span reads GMAKN.

It belongs to the FGGY kinase family.

It catalyses the reaction glycerol + ATP = sn-glycerol 3-phosphate + ADP + H(+). It participates in polyol metabolism; glycerol degradation via glycerol kinase pathway; sn-glycerol 3-phosphate from glycerol: step 1/1. This is Probable glycerol kinase (gk) from Dictyostelium discoideum (Social amoeba).